We begin with the raw amino-acid sequence, 481 residues long: Cobyric acid synthase (481 aa).

In terms of domain architecture, GATase cobBQ-type spans 249–436 (GLHIVCLRLS…LHGMFRDDAF (188 aa)). The Nucleophile role is filled by Cys331. His428 is a catalytic residue.

The protein belongs to the CobB/CobQ family. CobQ subfamily.

Its pathway is cofactor biosynthesis; adenosylcobalamin biosynthesis. In terms of biological role, catalyzes amidations at positions B, D, E, and G on adenosylcobyrinic A,C-diamide. NH(2) groups are provided by glutamine, and one molecule of ATP is hydrogenolyzed for each amidation. This is Cobyric acid synthase from Jannaschia sp. (strain CCS1).